Consider the following 1293-residue polypeptide: MEIIRGAPALSTFRVQKLMEACVSAALPVRQIYAEYVHLADLSELLKPTEREQLEKILTYGPAIEAHTPQGSLLFVTPRPGTISPWSSKATDIAHNCGLGKVKRLERGIAYYVESDTLTAEQQRTLQGLLHDRMVEVVLNDFAKADVLFKRTEPAPFKSVNVLAEGRRALEVANVEMGLALAEDEIDYLVENFVRLNRNPNDIELMMFAQANSEHCRHKIFNADWTIDGKAQPKSLFKMIKNTFEVTPDHVLSAYKDNAAVMEGSVAGRFFPDPNGVYSYHTEPMHVLMKVETHNHPTAISPYPGAATGSGGEIRDEGATGRGSKPKAGLTGFSVSNLKIPGFVQPWEGNYGKPDRIVSALDIMTEGPLGGAAFNNEFGRPALLGYFRTYEQEVSSHNGVEMRGYHKPIMLAGGLGNIREEHVQKGEITVGAKLIVLGGPAMNIGLGGGAASSMASGQSSEDLDFASVQRENPEMERRCQEVIDRCWQLGDKNPIQFIHDVGAGGLSNAFPELVNDGDRGGIFNLRNVPSDEPGMSPLEIWCNESQERYVLSVAAEDLPLFTAICERERAPFAVVGEAIQEQHLTLADSHFDNNPIDLPLEVLLGKAPKMSRNVVSAKAVSPALEQSQIDVKDAVKRVLSLPTVADKTFLITIGDRTVTGLVNRDQMVGPWQVPVADCAVTAASFDTYAGEAMSLGERTPLALLDFGASARMAVAESIMNIAGADIGSFKRIKLSANWMSAAGHPGEDAGLYEAVKAVGEELCPELSLTIPVGKDSMSMKTAWQQDGVNKTVTSPMSLVITAFGVVQDIRNTVTPELRSDKGETSLLLVDLGAGQNRLGGSCLAQVYGELGDVAPDLDDAALLRGFFETMQKLVANKLVIAYHDRSDGGLFTTLVEMAFAGNIGLDIDVEDLQGTDLERLFNEELGAVLQVSRDNAAKIAAQFAIAGVPCHVIGTLADDQCITIKDGAREIFSDTRVALRTVWSETTYRMQAMRDNPACALEEFKLKQDETDLGLTVNLSFDPSEDVAAPYILKGAAPKMAILREQGVNSHVEMAAAFDRAGFESRDVHMSDILSGRISLEEFQGLVACGGFSYGDVLGAGEGWAKSILFNERARNEFSRFFERDSSFALGVCNGCQMLSNLKEIIPGSEHWPRFVRNRSERFEARFSLVEVQQSPSLFFQGMAGSRMPIAVSHGEGHAEFASAQALALAEASGTIALRFVNGKGEIATQYPQNPNGSPNGLTGICTTDGRVTLMMPHPERVFRTVANSWHPDNWGEDSPWMRMFRNARVNLG.

ATP-binding positions include 305-316 and alanine 676; that span reads GAATGSGGEIRD. Positions 305–327 are disordered; that stretch reads GAATGSGGEIRDEGATGRGSKPK. Aspartate 677, glutamate 716, asparagine 720, and aspartate 884 together coordinate Mg(2+). Residue serine 886 participates in ATP binding. The 254-residue stretch at 1040–1293 folds into the Glutamine amidotransferase type-1 domain; the sequence is MAILREQGVN…MFRNARVNLG (254 aa). The Nucleophile role is filled by cysteine 1133. Residues histidine 1258 and glutamate 1260 contribute to the active site.

In the N-terminal section; belongs to the FGAMS family. Monomer.

The protein localises to the cytoplasm. It catalyses the reaction N(2)-formyl-N(1)-(5-phospho-beta-D-ribosyl)glycinamide + L-glutamine + ATP + H2O = 2-formamido-N(1)-(5-O-phospho-beta-D-ribosyl)acetamidine + L-glutamate + ADP + phosphate + H(+). Its pathway is purine metabolism; IMP biosynthesis via de novo pathway; 5-amino-1-(5-phospho-D-ribosyl)imidazole from N(2)-formyl-N(1)-(5-phospho-D-ribosyl)glycinamide: step 1/2. In terms of biological role, phosphoribosylformylglycinamidine synthase involved in the purines biosynthetic pathway. Catalyzes the ATP-dependent conversion of formylglycinamide ribonucleotide (FGAR) and glutamine to yield formylglycinamidine ribonucleotide (FGAM) and glutamate. The chain is Phosphoribosylformylglycinamidine synthase from Shewanella oneidensis (strain ATCC 700550 / JCM 31522 / CIP 106686 / LMG 19005 / NCIMB 14063 / MR-1).